A 214-amino-acid polypeptide reads, in one-letter code: MLKKIIILFLGVFVLSGCTDSFRGYFQKSANNRLVDSKGFKGGKRKPLYNNKYISLAKKNIVEDNLDDPEDDDDDYDNPLRGEQIDPVKRNREIYLKMIRRDMEKYKAESGESSDDDDMTLSKANKKVRKDNTDKERKMQEELDQIKAMLRETKRDISKYTCPNATANQNYVPPVSNYEPVAPVKNNKPYNNNSKVKQKFIREDDDYSSNACSI.

The first 17 residues, 1-17 (MLKKIIILFLGVFVLSG), serve as a signal peptide directing secretion. Residue Cys18 is the site of N-palmitoyl cysteine attachment. A lipid anchor (S-diacylglycerol cysteine) is attached at Cys18. Residues 64-77 (DNLDDPEDDDDDYD) are compositionally biased toward acidic residues. 3 disordered regions span residues 64 to 83 (DNLDDPEDDDDDYDNPLRGE), 106 to 138 (YKAESGESSDDDDMTLSKANKKVRKDNTDKERK), and 166 to 197 (TANQNYVPPVSNYEPVAPVKNNKPYNNNSKVK). Residues 120-162 (TLSKANKKVRKDNTDKERKMQEELDQIKAMLRETKRDISKYTC) adopt a coiled-coil conformation.

The protein resides in the cell membrane. This is an uncharacterized protein from Rickettsia bellii (strain RML369-C).